The sequence spans 441 residues: Serine hydroxymethyltransferase (441 aa).

Residues leucine 119 and 123–125 each bind (6S)-5,6,7,8-tetrahydrofolate; that span reads GHL. An N6-(pyridoxal phosphate)lysine modification is found at lysine 228. 370 to 372 is a binding site for (6S)-5,6,7,8-tetrahydrofolate; that stretch reads SPF.

The protein belongs to the SHMT family. In terms of assembly, homodimer. Requires pyridoxal 5'-phosphate as cofactor.

The protein resides in the cytoplasm. It carries out the reaction (6R)-5,10-methylene-5,6,7,8-tetrahydrofolate + glycine + H2O = (6S)-5,6,7,8-tetrahydrofolate + L-serine. It participates in one-carbon metabolism; tetrahydrofolate interconversion. It functions in the pathway amino-acid biosynthesis; glycine biosynthesis; glycine from L-serine: step 1/1. Its function is as follows. Catalyzes the reversible interconversion of serine and glycine with tetrahydrofolate (THF) serving as the one-carbon carrier. This reaction serves as the major source of one-carbon groups required for the biosynthesis of purines, thymidylate, methionine, and other important biomolecules. Also exhibits THF-independent aldolase activity toward beta-hydroxyamino acids, producing glycine and aldehydes, via a retro-aldol mechanism. In Chlorobium phaeovibrioides (strain DSM 265 / 1930) (Prosthecochloris vibrioformis (strain DSM 265)), this protein is Serine hydroxymethyltransferase.